A 336-amino-acid polypeptide reads, in one-letter code: Mitochondrial import receptor subunit TOM40 homolog (336 aa).

A disordered region spans residues 1-58 (MGNVLAASSPAPPAAGSPPAPGLVSVPPGFTMPPVAGLTPTPDKKETQEDRLPNPGTF). The span at 10-21 (PAPPAAGSPPAP) shows a compositional bias: pro residues. The span at 42-52 (PDKKETQEDRL) shows a compositional bias: basic and acidic residues.

It belongs to the Tom40 family. Forms part of the preprotein translocase complex of the outer mitochondrial membrane (TOM complex). Interacts with mitochondrial targeting sequences.

Its subcellular location is the mitochondrion outer membrane. In terms of biological role, channel-forming protein essential for import of protein precursors into mitochondria. The polypeptide is Mitochondrial import receptor subunit TOM40 homolog (tomm40) (Xenopus tropicalis (Western clawed frog)).